A 159-amino-acid polypeptide reads, in one-letter code: 2-C-methyl-D-erythritol 2,4-cyclodiphosphate synthase (159 aa).

Residues Asp8 and His10 each contribute to the a divalent metal cation site. Residues 8-10 (DVH) and 34-35 (HS) each bind 4-CDP-2-C-methyl-D-erythritol 2-phosphate. His42 provides a ligand contact to a divalent metal cation. 4-CDP-2-C-methyl-D-erythritol 2-phosphate contacts are provided by residues 56–58 (DIG), 61–65 (FPDTD), 100–106 (AQAPKML), 132–135 (TTTE), Phe139, and Arg142.

This sequence belongs to the IspF family. As to quaternary structure, homotrimer. A divalent metal cation is required as a cofactor.

It carries out the reaction 4-CDP-2-C-methyl-D-erythritol 2-phosphate = 2-C-methyl-D-erythritol 2,4-cyclic diphosphate + CMP. The protein operates within isoprenoid biosynthesis; isopentenyl diphosphate biosynthesis via DXP pathway; isopentenyl diphosphate from 1-deoxy-D-xylulose 5-phosphate: step 4/6. Involved in the biosynthesis of isopentenyl diphosphate (IPP) and dimethylallyl diphosphate (DMAPP), two major building blocks of isoprenoid compounds. Catalyzes the conversion of 4-diphosphocytidyl-2-C-methyl-D-erythritol 2-phosphate (CDP-ME2P) to 2-C-methyl-D-erythritol 2,4-cyclodiphosphate (ME-CPP) with a corresponding release of cytidine 5-monophosphate (CMP). The protein is 2-C-methyl-D-erythritol 2,4-cyclodiphosphate synthase of Salmonella arizonae (strain ATCC BAA-731 / CDC346-86 / RSK2980).